A 156-amino-acid chain; its full sequence is Small ribosomal subunit protein uS7 (156 aa).

It belongs to the universal ribosomal protein uS7 family. As to quaternary structure, part of the 30S ribosomal subunit. Contacts proteins S9 and S11.

Its function is as follows. One of the primary rRNA binding proteins, it binds directly to 16S rRNA where it nucleates assembly of the head domain of the 30S subunit. Is located at the subunit interface close to the decoding center, probably blocks exit of the E-site tRNA. This chain is Small ribosomal subunit protein uS7, found in Rhodopseudomonas palustris (strain BisB5).